The following is a 433-amino-acid chain: Serine/threonine-protein phosphatase 2A activator 2 (433 aa).

The span at 1–10 shows a compositional bias: pro residues; the sequence is MTSQAPPQPA. Disordered regions lie at residues 1-67 and 367-400; these read MTSQ…NWTF and SMSE…GTGW. The segment covering 11 to 23 has biased composition (low complexity); sequence SSPGVAAPAAASS. Positions 45-59 are enriched in pro residues; the sequence is NPTPIPETPALPTPP. The span at 367–382 shows a compositional bias: acidic residues; that stretch reads SMSEDTGAGDEADVED. Residues 383-396 are compositionally biased toward basic and acidic residues; that stretch reads DPHAGHDHTGKAHD.

This sequence belongs to the PTPA-type PPIase family.

The protein localises to the cytoplasm. It carries out the reaction [protein]-peptidylproline (omega=180) = [protein]-peptidylproline (omega=0). Its function is as follows. PPIases accelerate the folding of proteins. It catalyzes the cis-trans isomerization of proline imidic peptide bonds in oligopeptides. Acts as a regulatory subunit for PP2A-like phosphatases modulating their activity or substrate specificity, probably by inducing a conformational change in the catalytic subunit, a direct target of the PPIase. Can reactivate inactive phosphatase PP2A-phosphatase methylesterase complexes (PP2Ai) in presence of ATP and Mg(2+) by dissociating the inactive form from the complex. This is Serine/threonine-protein phosphatase 2A activator 2 (RRD2) from Gibberella zeae (strain ATCC MYA-4620 / CBS 123657 / FGSC 9075 / NRRL 31084 / PH-1) (Wheat head blight fungus).